The chain runs to 140 residues: Beta/delta-urticatoxin-De2a (140 aa).

An N-terminal signal peptide occupies residues 1–18 (MKTSTALVLLLALTATSA). Residues 19 to 78 (SSGDHQFIDEQNIMNVAEGKNVISSLSSSGGGDDAAAIMESVLVNGGNRKMVFMMVSGSQ) constitute a propeptide that is removed on maturation. 6 disulfides stabilise this stretch: cysteine 81–cysteine 95, cysteine 88–cysteine 100, cysteine 94–cysteine 108, cysteine 113–cysteine 127, cysteine 120–cysteine 131, and cysteine 126–cysteine 139.

It belongs to the urticatoxin-2 family. Expressed in trichomes, that are stiff epidermal hairs located on the surface of petioles and leaves.

Its subcellular location is the secreted. Its function is as follows. Plant defense neurotoxin that causes pain and systemic symptoms in mammals via modulation of voltage-gated sodium channels (Nav). Potent modulator of human Nav1.5/SCN5A (EC(50)=55 nM), Nav1.6/SCN8A (EC(50)=0.86 nM), and Nav1.7/SCN9A (EC(50)=208 nM), where it shifts the activation threshold to more negative potentials and delays fast inactivation. Also shifts the voltage-dependence of steady-state fast inactivation of Nav1.6/SCN8A, but not that of Nav1.5/SCN5A or Nav1.7/SCN9A. On Nav1.7/SCN9A, principally acts by binding to extracellular loops of domain IV (Nav site 3). In vivo, intraplantar injection into mice causes numerous dose-dependent, immediate, and long-lasting spontaneous pain behaviors, while no swelling is observed in the injected paw. At the highest doses tested, systemic symptoms including hypokinesia and hypersalivation are observed. The polypeptide is Beta/delta-urticatoxin-De2a (Dendrocnide excelsa (Giant stinging tree)).